A 338-amino-acid chain; its full sequence is MIQKNWQELIKPSKLDVTPGDDSKRFATIIAEPLERGFGLTLGNALRRILLSSLQGAAITSVHIDGVLHEFSSIPGVREDVTDIILNIKDIAIKMQGEGPKRMVLKKQGPGKVLAGDIGAVGDVQILNPNLVICTLDEGAEIRMEFTVNTGKGYVAADRNRAEDAPIGLIPVDSLYSPVKKVSYKVENTREGQILDYDKLTLQIETNGSLTPEDAVAFSARILQDQLNVFVNFEEPRREEATPSIPELAFNPALLKKVDELELSVRSANCLKNDNIVYIGDLIQKTEAEMLRTPNFGRKSLNEIKEVLAQMGLHLGMEVTGWPPDNIDELAKRFEEHY.

An alpha N-terminal domain (alpha-NTD) region spans residues 1-234 (MIQKNWQELI…DQLNVFVNFE (234 aa)). Positions 250-338 (FNPALLKKVD…ELAKRFEEHY (89 aa)) are alpha C-terminal domain (alpha-CTD).

Belongs to the RNA polymerase alpha chain family. As to quaternary structure, homodimer. The RNAP catalytic core consists of 2 alpha, 1 beta, 1 beta' and 1 omega subunit. When a sigma factor is associated with the core the holoenzyme is formed, which can initiate transcription.

The enzyme catalyses RNA(n) + a ribonucleoside 5'-triphosphate = RNA(n+1) + diphosphate. In terms of biological role, DNA-dependent RNA polymerase catalyzes the transcription of DNA into RNA using the four ribonucleoside triphosphates as substrates. This is DNA-directed RNA polymerase subunit alpha from Beijerinckia indica subsp. indica (strain ATCC 9039 / DSM 1715 / NCIMB 8712).